We begin with the raw amino-acid sequence, 336 residues long: Dihydroorotate dehydrogenase (quinone) (336 aa).

FMN-binding positions include 62–66 (AGLDK) and Thr-86. Substrate is bound at residue Lys-66. Position 111 to 115 (111 to 115 (NRMGF)) interacts with substrate. FMN-binding residues include Asn-139 and Asn-172. Residue Asn-172 participates in substrate binding. Catalysis depends on Ser-175, which acts as the Nucleophile. Position 177 (Asn-177) interacts with substrate. Positions 217 and 245 each coordinate FMN. Substrate is bound at residue 246-247 (NT). Residues Gly-268, Gly-297, and 318–319 (YT) contribute to the FMN site.

The protein belongs to the dihydroorotate dehydrogenase family. Type 2 subfamily. As to quaternary structure, monomer. The cofactor is FMN.

It localises to the cell membrane. The catalysed reaction is (S)-dihydroorotate + a quinone = orotate + a quinol. The protein operates within pyrimidine metabolism; UMP biosynthesis via de novo pathway; orotate from (S)-dihydroorotate (quinone route): step 1/1. Functionally, catalyzes the conversion of dihydroorotate to orotate with quinone as electron acceptor. The protein is Dihydroorotate dehydrogenase (quinone) of Vibrio parahaemolyticus serotype O3:K6 (strain RIMD 2210633).